A 475-amino-acid polypeptide reads, in one-letter code: Sulfate adenylyltransferase subunit 1 (475 aa).

Positions 24-240 (KSLLRFLTCG…ESAEVERELE (217 aa)) constitute a tr-type G domain. The segment at 33–40 (GSVDDGKS) is G1. Position 33-40 (33-40 (GSVDDGKS)) interacts with GTP. Residues 91 to 95 (GITID) form a G2 region. The segment at 112-115 (DTPG) is G3. GTP-binding positions include 112 to 116 (DTPGH) and 167 to 170 (NKMD). Residues 167–170 (NKMD) form a G4 region. The G5 stretch occupies residues 204-206 (SAL).

It belongs to the TRAFAC class translation factor GTPase superfamily. Classic translation factor GTPase family. CysN/NodQ subfamily. Heterodimer composed of CysD, the smaller subunit, and CysN.

The enzyme catalyses sulfate + ATP + H(+) = adenosine 5'-phosphosulfate + diphosphate. It participates in sulfur metabolism; hydrogen sulfide biosynthesis; sulfite from sulfate: step 1/3. In terms of biological role, with CysD forms the ATP sulfurylase (ATPS) that catalyzes the adenylation of sulfate producing adenosine 5'-phosphosulfate (APS) and diphosphate, the first enzymatic step in sulfur assimilation pathway. APS synthesis involves the formation of a high-energy phosphoric-sulfuric acid anhydride bond driven by GTP hydrolysis by CysN coupled to ATP hydrolysis by CysD. The polypeptide is Sulfate adenylyltransferase subunit 1 (Aeromonas hydrophila subsp. hydrophila (strain ATCC 7966 / DSM 30187 / BCRC 13018 / CCUG 14551 / JCM 1027 / KCTC 2358 / NCIMB 9240 / NCTC 8049)).